The chain runs to 373 residues: Muconate cycloisomerase 1 (373 aa).

Lysine 169 is an active-site residue. Lysine 169 serves as the catalytic Proton acceptor. Residues aspartate 198, glutamate 224, and aspartate 249 each coordinate Mn(2+). The active-site Proton donor is glutamate 327.

Belongs to the mandelate racemase/muconate lactonizing enzyme family. Mn(2+) is required as a cofactor.

The enzyme catalyses (S)-muconolactone = cis,cis-muconate + H(+). In Rhodococcus opacus (Nocardia opaca), this protein is Muconate cycloisomerase 1 (catB).